The sequence spans 93 residues: DNA-directed RNA polymerase subunit Rpo11 (93 aa).

The protein belongs to the archaeal Rpo11/eukaryotic RPB11/RPC19 RNA polymerase subunit family. Part of the RNA polymerase complex.

The protein resides in the cytoplasm. The enzyme catalyses RNA(n) + a ribonucleoside 5'-triphosphate = RNA(n+1) + diphosphate. DNA-dependent RNA polymerase (RNAP) catalyzes the transcription of DNA into RNA using the four ribonucleoside triphosphates as substrates. This chain is DNA-directed RNA polymerase subunit Rpo11, found in Methanocella arvoryzae (strain DSM 22066 / NBRC 105507 / MRE50).